The chain runs to 441 residues: Dihydroorotase (441 aa).

Zn(2+)-binding residues include H77 and H79. Substrate contacts are provided by residues 79 to 81 (HFR) and N111. Residues D167, H194, and H248 each coordinate Zn(2+). Substrate is bound at residue N294. D321 is a binding site for Zn(2+). Residue D321 is part of the active site. Substrate is bound by residues H325 and 339 to 340 (FG).

The protein belongs to the metallo-dependent hydrolases superfamily. DHOase family. Class I DHOase subfamily. Zn(2+) serves as cofactor.

It carries out the reaction (S)-dihydroorotate + H2O = N-carbamoyl-L-aspartate + H(+). It participates in pyrimidine metabolism; UMP biosynthesis via de novo pathway; (S)-dihydroorotate from bicarbonate: step 3/3. Its function is as follows. Catalyzes the reversible cyclization of carbamoyl aspartate to dihydroorotate. This chain is Dihydroorotase, found in Wolbachia sp. subsp. Drosophila simulans (strain wRi).